A 299-amino-acid polypeptide reads, in one-letter code: Urease accessory protein UreD (299 aa).

This sequence belongs to the UreD family. As to quaternary structure, ureD, UreF and UreG form a complex that acts as a GTP-hydrolysis-dependent molecular chaperone, activating the urease apoprotein by helping to assemble the nickel containing metallocenter of UreC. The UreE protein probably delivers the nickel.

The protein resides in the cytoplasm. Functionally, required for maturation of urease via the functional incorporation of the urease nickel metallocenter. The protein is Urease accessory protein UreD of Natronomonas pharaonis (strain ATCC 35678 / DSM 2160 / CIP 103997 / JCM 8858 / NBRC 14720 / NCIMB 2260 / Gabara) (Halobacterium pharaonis).